A 99-amino-acid polypeptide reads, in one-letter code: Small ribosomal subunit protein uS14 (99 aa).

This sequence belongs to the universal ribosomal protein uS14 family. As to quaternary structure, part of the 30S ribosomal subunit. Contacts proteins S3 and S10.

Functionally, binds 16S rRNA, required for the assembly of 30S particles and may also be responsible for determining the conformation of the 16S rRNA at the A site. The chain is Small ribosomal subunit protein uS14 from Bacteroides fragilis (strain ATCC 25285 / DSM 2151 / CCUG 4856 / JCM 11019 / LMG 10263 / NCTC 9343 / Onslow / VPI 2553 / EN-2).